A 246-amino-acid polypeptide reads, in one-letter code: Proteasome subunit alpha type-6 (246 aa).

The protein belongs to the peptidase T1A family. The 26S proteasome consists of a 20S proteasome core and two 19S regulatory subunits. The 20S proteasome core is composed of 28 subunits that are arranged in four stacked rings, resulting in a barrel-shaped structure. The two end rings are each formed by seven alpha subunits, and the two central rings are each formed by seven beta subunits. The catalytic chamber with the active sites is on the inside of the barrel.

It is found in the cytoplasm. The protein localises to the nucleus. Its function is as follows. The proteasome is a multicatalytic proteinase complex which is characterized by its ability to cleave peptides with Arg, Phe, Tyr, Leu, and Glu adjacent to the leaving group at neutral or slightly basic pH. The proteasome has an ATP-dependent proteolytic activity. In Caenorhabditis elegans, this protein is Proteasome subunit alpha type-6 (pas-1).